We begin with the raw amino-acid sequence, 545 residues long: MAEVKCSSSTGSPTTNGLVANAELEVKKLQELVRKLEKQNEQLRNRASAVSNCTPSPHLLLQHPPSVVHQSGTCILSSPVLTRPAGLCLPSPVPTLLCTSAVAGSLFSPESMGCFSTNKRLHLSCINAAEGPQNDCPVPGSTLLDEVQVLDLEDGYCSGDEDTWLYVSPTKDQRTFDSSVSPLQWCRQVLDHPSPEIEAAKRSLCFRLEQGYTVKTSHLSPQSSVDSELSTSELEDDSISMGYKLQDLTDVQIMARLQEESLRQDFATTSTCSSVSRPRSSFSLYSGKKLSCSSDQDSDRYSVEEDDEDFDHLPPPQPRLSRCSPLQRGLSHSQTFSSIRDCRKSPSSQFLNGYQQYNYSSQPQTTEQSQSRTNADKLRRSMPNLARMPSTNNNPVVSMTTVRNSQSFDSNLHGAANGVSRMQSSIPSPGQLQQRVHSVGHFPVSVRPPLKATAYVSPTVQGGSGIPSSTSLQSLSSSGIPMPNKTTSAATIGRSALPRPALSTANGSSIPRSKIAQPQRSFLQPPKTLASLSTLRDGNWRDGCY.

A coiled-coil region spans residues 14–53 (TTNGLVANAELEVKKLQELVRKLEKQNEQLRNRASAVSNC). Composition is skewed to low complexity over residues 268 to 286 (TTSTCSSVSRPRSSFSLYS) and 466 to 481 (IPSSTSLQSLSSSGIP). 2 disordered regions span residues 268–342 (TTST…IRDC) and 461–526 (QGGS…LQPP). A compositionally biased stretch (polar residues) spans 503–522 (STANGSSIPRSKIAQPQRSF).

The protein belongs to the SLAIN motif-containing family.

The protein localises to the cytoplasm. Its subcellular location is the cytoskeleton. Its function is as follows. Microtubule plus-end tracking protein that might be involved in the regulation of cytoplasmic microtubule dynamics, microtubule organization and microtubule elongation. The sequence is that of SLAIN motif-containing protein 1 (slain1) from Xenopus tropicalis (Western clawed frog).